The following is a 498-amino-acid chain: ATP synthase subunit beta, chloroplastic (498 aa).

Position 172–179 (172–179 (GGAGVGKT)) interacts with ATP.

The protein belongs to the ATPase alpha/beta chains family. F-type ATPases have 2 components, CF(1) - the catalytic core - and CF(0) - the membrane proton channel. CF(1) has five subunits: alpha(3), beta(3), gamma(1), delta(1), epsilon(1). CF(0) has four main subunits: a(1), b(1), b'(1) and c(9-12).

The protein resides in the plastid. It is found in the chloroplast thylakoid membrane. The catalysed reaction is ATP + H2O + 4 H(+)(in) = ADP + phosphate + 5 H(+)(out). Functionally, produces ATP from ADP in the presence of a proton gradient across the membrane. The catalytic sites are hosted primarily by the beta subunits. The polypeptide is ATP synthase subunit beta, chloroplastic (Canella winterana (Wild cinnamon)).